Reading from the N-terminus, the 847-residue chain is DNA mismatch repair protein MutS (847 aa).

Gly-602–Ser-609 is an ATP binding site. Residues Glu-788–Gln-807 form a disordered region. Positions Ala-796–Gln-807 are enriched in polar residues.

This sequence belongs to the DNA mismatch repair MutS family.

This protein is involved in the repair of mismatches in DNA. It is possible that it carries out the mismatch recognition step. This protein has a weak ATPase activity. The polypeptide is DNA mismatch repair protein MutS (Streptococcus gordonii (strain Challis / ATCC 35105 / BCRC 15272 / CH1 / DL1 / V288)).